A 175-amino-acid chain; its full sequence is Inorganic pyrophosphatase (175 aa).

Substrate is bound by residues lysine 30, arginine 44, and tyrosine 56. Residues aspartate 66, aspartate 71, and aspartate 103 each contribute to the Mg(2+) site. A substrate-binding site is contributed by tyrosine 142.

Belongs to the PPase family. In terms of assembly, homohexamer. The cofactor is Mg(2+).

It is found in the cytoplasm. It carries out the reaction diphosphate + H2O = 2 phosphate + H(+). Functionally, catalyzes the hydrolysis of inorganic pyrophosphate (PPi) forming two phosphate ions. This chain is Inorganic pyrophosphatase, found in Ralstonia nicotianae (strain ATCC BAA-1114 / GMI1000) (Ralstonia solanacearum).